Reading from the N-terminus, the 80-residue chain is Large ribosomal subunit protein bL31B (80 aa).

It belongs to the bacterial ribosomal protein bL31 family. Type B subfamily. Part of the 50S ribosomal subunit.

This is Large ribosomal subunit protein bL31B from Xanthomonas campestris pv. campestris (strain 8004).